The sequence spans 297 residues: N-acetylmuramic acid 6-phosphate etherase (297 aa).

The SIS domain maps to 55 to 218 (AVAALKSGGR…STGAMVKFGK (164 aa)). E83 (proton donor) is an active-site residue. E114 is a catalytic residue.

Belongs to the GCKR-like family. MurNAc-6-P etherase subfamily. In terms of assembly, homodimer.

The catalysed reaction is N-acetyl-D-muramate 6-phosphate + H2O = N-acetyl-D-glucosamine 6-phosphate + (R)-lactate. It participates in amino-sugar metabolism; 1,6-anhydro-N-acetylmuramate degradation. The protein operates within amino-sugar metabolism; N-acetylmuramate degradation. It functions in the pathway cell wall biogenesis; peptidoglycan recycling. In terms of biological role, specifically catalyzes the cleavage of the D-lactyl ether substituent of MurNAc 6-phosphate, producing GlcNAc 6-phosphate and D-lactate. Together with AnmK, is also required for the utilization of anhydro-N-acetylmuramic acid (anhMurNAc) either imported from the medium or derived from its own cell wall murein, and thus plays a role in cell wall recycling. The polypeptide is N-acetylmuramic acid 6-phosphate etherase (Salmonella dublin (strain CT_02021853)).